Reading from the N-terminus, the 199-residue chain is Peptidyl-tRNA hydrolase (199 aa).

Tyr-18 contacts tRNA. His-23 acts as the Proton acceptor in catalysis. Residues Tyr-72, Asn-74, and Asn-120 each coordinate tRNA.

This sequence belongs to the PTH family. As to quaternary structure, monomer.

The protein localises to the cytoplasm. It catalyses the reaction an N-acyl-L-alpha-aminoacyl-tRNA + H2O = an N-acyl-L-amino acid + a tRNA + H(+). Functionally, hydrolyzes ribosome-free peptidyl-tRNAs (with 1 or more amino acids incorporated), which drop off the ribosome during protein synthesis, or as a result of ribosome stalling. In terms of biological role, catalyzes the release of premature peptidyl moieties from peptidyl-tRNA molecules trapped in stalled 50S ribosomal subunits, and thus maintains levels of free tRNAs and 50S ribosomes. This Bifidobacterium animalis subsp. lactis (strain AD011) protein is Peptidyl-tRNA hydrolase.